Here is a 146-residue protein sequence, read N- to C-terminus: Small ribosomal subunit protein uS13 (146 aa).

Residues 119 to 146 (ARGKKVRGQRTRSTGRKGRTVGVVRRKR) form a disordered region.

It belongs to the universal ribosomal protein uS13 family. Part of the 30S ribosomal subunit. Forms a loose heterodimer with protein S19. Forms two bridges to the 50S subunit in the 70S ribosome.

In terms of biological role, located at the top of the head of the 30S subunit, it contacts several helices of the 16S rRNA. In the 70S ribosome it contacts the 23S rRNA (bridge B1a) and protein L5 of the 50S subunit (bridge B1b), connecting the 2 subunits; these bridges are implicated in subunit movement. In Archaeoglobus fulgidus (strain ATCC 49558 / DSM 4304 / JCM 9628 / NBRC 100126 / VC-16), this protein is Small ribosomal subunit protein uS13.